Here is a 145-residue protein sequence, read N- to C-terminus: Prefoldin subunit alpha (145 aa).

Belongs to the prefoldin alpha subunit family. As to quaternary structure, heterohexamer of two alpha and four beta subunits.

Its subcellular location is the cytoplasm. In terms of biological role, molecular chaperone capable of stabilizing a range of proteins. Seems to fulfill an ATP-independent, HSP70-like function in archaeal de novo protein folding. This chain is Prefoldin subunit alpha, found in Nitrosopumilus maritimus (strain SCM1).